A 238-amino-acid polypeptide reads, in one-letter code: Probable succinyl-CoA:3-ketoacid coenzyme A transferase subunit A (238 aa).

24–30 (GGFGLCG) is a binding site for CoA.

Belongs to the 3-oxoacid CoA-transferase subunit A family. Heterodimer of a subunit A and a subunit B.

It catalyses the reaction a 3-oxo acid + succinyl-CoA = a 3-oxoacyl-CoA + succinate. This is Probable succinyl-CoA:3-ketoacid coenzyme A transferase subunit A (scoA) from Bacillus subtilis (strain 168).